The sequence spans 460 residues: Glycine--tRNA ligase (460 aa).

Positions 98 and 172 each coordinate substrate. Residues 204–206 (RNE), 214–219 (FRTREF), 288–289 (EL), and 332–335 (GADR) each bind ATP. Residue 219-223 (FEQME) participates in substrate binding. Residue 328–332 (EPSLG) coordinates substrate.

The protein belongs to the class-II aminoacyl-tRNA synthetase family. As to quaternary structure, homodimer.

It is found in the cytoplasm. The enzyme catalyses tRNA(Gly) + glycine + ATP = glycyl-tRNA(Gly) + AMP + diphosphate. Catalyzes the attachment of glycine to tRNA(Gly). This chain is Glycine--tRNA ligase, found in Geobacillus kaustophilus (strain HTA426).